The following is a 207-amino-acid chain: MTHPDEKPWILGLTGGIGSGKSAAAKCFSDLGIDTVDADHAARWVVEPGRPALEQIAAHFGKGVLQTSGELDRGALRKLIFETPEQRRWLEALLHPLINQEIVSHLAKAKSPYAILVSPLLVESGQYRMVQRLLVIDAPAHLQIERTMLRDSSSQEQVEAILKVQIQREDRLRHANDVLVNDRDHAWLSSEVERLHHFYLTLRGGQS.

The DPCK domain occupies 10–207 (ILGLTGGIGS…FYLTLRGGQS (198 aa)). 18–23 (GSGKSA) is an ATP binding site.

The protein belongs to the CoaE family.

It localises to the cytoplasm. The enzyme catalyses 3'-dephospho-CoA + ATP = ADP + CoA + H(+). Its pathway is cofactor biosynthesis; coenzyme A biosynthesis; CoA from (R)-pantothenate: step 5/5. Its function is as follows. Catalyzes the phosphorylation of the 3'-hydroxyl group of dephosphocoenzyme A to form coenzyme A. This Pseudomonas syringae pv. syringae (strain B728a) protein is Dephospho-CoA kinase.